A 231-amino-acid polypeptide reads, in one-letter code: Cytidylate kinase (231 aa).

An ATP-binding site is contributed by 18–26 (GPSGTGKSS).

Belongs to the cytidylate kinase family. Type 1 subfamily.

It localises to the cytoplasm. It catalyses the reaction CMP + ATP = CDP + ADP. The catalysed reaction is dCMP + ATP = dCDP + ADP. The chain is Cytidylate kinase from Streptomyces avermitilis (strain ATCC 31267 / DSM 46492 / JCM 5070 / NBRC 14893 / NCIMB 12804 / NRRL 8165 / MA-4680).